Here is a 79-residue protein sequence, read N- to C-terminus: Small ribosomal subunit protein bS20 (79 aa).

Belongs to the bacterial ribosomal protein bS20 family.

Binds directly to 16S ribosomal RNA. The sequence is that of Small ribosomal subunit protein bS20 from Karelsulcia muelleri (strain GWSS) (Sulcia muelleri).